The following is a 448-amino-acid chain: uncharacterized protein (448 aa).

Residues 19-41 (LGLLVPFLLLLFSCTNTVGYGVL) form a helical membrane-spanning segment. Residues 105-181 (YSYATSVLDG…CFSHGLSLFD (77 aa)) enclose the SH3b domain.

The protein resides in the membrane. This is an uncharacterized protein from Treponema pallidum (strain Nichols).